The primary structure comprises 432 residues: Enolase (432 aa).

Gln167 is a binding site for (2R)-2-phosphoglycerate. The active-site Proton donor is Glu209. Mg(2+) contacts are provided by Asp246, Glu290, and Asp317. The (2R)-2-phosphoglycerate site is built by Lys342, Arg371, Ser372, and Lys393. Lys342 serves as the catalytic Proton acceptor.

The protein belongs to the enolase family. As to quaternary structure, component of the RNA degradosome, a multiprotein complex involved in RNA processing and mRNA degradation. It depends on Mg(2+) as a cofactor.

It is found in the cytoplasm. It localises to the secreted. The protein resides in the cell surface. The catalysed reaction is (2R)-2-phosphoglycerate = phosphoenolpyruvate + H2O. Its pathway is carbohydrate degradation; glycolysis; pyruvate from D-glyceraldehyde 3-phosphate: step 4/5. Its function is as follows. Catalyzes the reversible conversion of 2-phosphoglycerate (2-PG) into phosphoenolpyruvate (PEP). It is essential for the degradation of carbohydrates via glycolysis. The chain is Enolase from Klebsiella pneumoniae (strain 342).